A 277-amino-acid chain; its full sequence is ATP synthase subunit delta (277 aa).

It belongs to the ATPase delta chain family. F-type ATPases have 2 components, F(1) - the catalytic core - and F(0) - the membrane proton channel. F(1) has five subunits: alpha(3), beta(3), gamma(1), delta(1), epsilon(1). F(0) has three main subunits: a(1), b(2) and c(10-14). The alpha and beta chains form an alternating ring which encloses part of the gamma chain. F(1) is attached to F(0) by a central stalk formed by the gamma and epsilon chains, while a peripheral stalk is formed by the delta and b chains.

The protein resides in the cell membrane. In terms of biological role, f(1)F(0) ATP synthase produces ATP from ADP in the presence of a proton or sodium gradient. F-type ATPases consist of two structural domains, F(1) containing the extramembraneous catalytic core and F(0) containing the membrane proton channel, linked together by a central stalk and a peripheral stalk. During catalysis, ATP synthesis in the catalytic domain of F(1) is coupled via a rotary mechanism of the central stalk subunits to proton translocation. This protein is part of the stalk that links CF(0) to CF(1). It either transmits conformational changes from CF(0) to CF(1) or is implicated in proton conduction. The sequence is that of ATP synthase subunit delta from Bifidobacterium animalis subsp. lactis (strain AD011).